A 312-amino-acid polypeptide reads, in one-letter code: MNFMELLLFVLSMLLAVAFLTVAERKTLGYMQRRVGPNAVGYYGVLMAMADAAKLLLKEMILPTHADKFMLIMSPMMTLMSALLCWAMIPFGPGITIMDSNYGFMLALAMGSVGVFGSLFAGWAGNSKYSTIGSMRSTAQLISYELVLTTVILICMLLTGTMNTSRYVELQESMWLVVPLLPLSLMWFMGCVAECARPPFDNVEAESELVSGHMTEYSSSMFVLFFLSEYASMLFYSTLTAILFFGGGTGLILGLKANFFAFTYIWVRAATPRVRYDKLIAMCWIVFLPLLFALALFMPSLIYIMDGYTFME.

The next 8 helical transmembrane spans lie at 3–23 (FMEL…LTVA), 37–57 (PNAV…KLLL), 69–89 (FMLI…WAMI), 104–124 (FMLA…AGWA), 141–161 (LISY…LTGT), 173–193 (SMWL…GCVA), 233–253 (MLFY…GLIL), and 279–299 (LIAM…LFMP).

Belongs to the complex I subunit 1 family.

The protein resides in the mitochondrion inner membrane. The enzyme catalyses a ubiquinone + NADH + 5 H(+)(in) = a ubiquinol + NAD(+) + 4 H(+)(out). Core subunit of the mitochondrial membrane respiratory chain NADH dehydrogenase (Complex I) that is believed to belong to the minimal assembly required for catalysis. Complex I functions in the transfer of electrons from NADH to the respiratory chain. The immediate electron acceptor for the enzyme is believed to be ubiquinone. This Debaryomyces hansenii (strain ATCC 36239 / CBS 767 / BCRC 21394 / JCM 1990 / NBRC 0083 / IGC 2968) (Yeast) protein is NADH-ubiquinone oxidoreductase chain 1 (ND1).